The following is a 183-amino-acid chain: Archaemetzincin (183 aa).

A Zn(2+)-binding site is contributed by His-131. The Proton acceptor role is filled by Glu-132. Zn(2+) contacts are provided by His-135, His-141, Cys-142, Cys-147, and Cys-166.

This sequence belongs to the peptidase M54 family. As to quaternary structure, monomer. Zn(2+) is required as a cofactor.

Its function is as follows. Probable zinc metalloprotease whose natural substrate is unknown. This Saccharolobus solfataricus (strain ATCC 35092 / DSM 1617 / JCM 11322 / P2) (Sulfolobus solfataricus) protein is Archaemetzincin.